The following is a 393-amino-acid chain: NAD(P)H-quinone oxidoreductase subunit H, chloroplastic (393 aa).

The protein belongs to the complex I 49 kDa subunit family. As to quaternary structure, NDH is composed of at least 16 different subunits, 5 of which are encoded in the nucleus.

It localises to the plastid. The protein localises to the chloroplast thylakoid membrane. The catalysed reaction is a plastoquinone + NADH + (n+1) H(+)(in) = a plastoquinol + NAD(+) + n H(+)(out). The enzyme catalyses a plastoquinone + NADPH + (n+1) H(+)(in) = a plastoquinol + NADP(+) + n H(+)(out). Functionally, NDH shuttles electrons from NAD(P)H:plastoquinone, via FMN and iron-sulfur (Fe-S) centers, to quinones in the photosynthetic chain and possibly in a chloroplast respiratory chain. The immediate electron acceptor for the enzyme in this species is believed to be plastoquinone. Couples the redox reaction to proton translocation, and thus conserves the redox energy in a proton gradient. The chain is NAD(P)H-quinone oxidoreductase subunit H, chloroplastic from Piper cenocladum (Ant piper).